Here is a 252-residue protein sequence, read N- to C-terminus: Cell division protein ZapD (252 aa).

The protein belongs to the ZapD family. As to quaternary structure, interacts with FtsZ.

It is found in the cytoplasm. Cell division factor that enhances FtsZ-ring assembly. Directly interacts with FtsZ and promotes bundling of FtsZ protofilaments, with a reduction in FtsZ GTPase activity. The chain is Cell division protein ZapD from Chromobacterium violaceum (strain ATCC 12472 / DSM 30191 / JCM 1249 / CCUG 213 / NBRC 12614 / NCIMB 9131 / NCTC 9757 / MK).